We begin with the raw amino-acid sequence, 144 residues long: Large ribosomal subunit protein uL15 (144 aa).

Positions Met-1–Leu-57 are disordered. The segment covering Arg-21 to Gly-31 has biased composition (gly residues).

It belongs to the universal ribosomal protein uL15 family. As to quaternary structure, part of the 50S ribosomal subunit.

Its function is as follows. Binds to the 23S rRNA. In Pseudomonas entomophila (strain L48), this protein is Large ribosomal subunit protein uL15.